The primary structure comprises 219 residues: Chloramphenicol acetyltransferase (219 aa).

The active-site Proton acceptor is His-190.

This sequence belongs to the chloramphenicol acetyltransferase family. Homotrimer.

The catalysed reaction is chloramphenicol + acetyl-CoA = chloramphenicol 3-acetate + CoA. In terms of biological role, this enzyme is an effector of chloramphenicol resistance in bacteria. In Clostridium butyricum, this protein is Chloramphenicol acetyltransferase (catB).